The following is a 358-amino-acid chain: Phospho-N-acetylmuramoyl-pentapeptide-transferase (358 aa).

10 helical membrane passes run 25 to 45 (RTIY…PWVI), 73 to 93 (TMGG…WADL), 97 to 117 (YVWT…TDDY), 134 to 154 (MFWQ…VAGM), 172 to 192 (YLYI…VNLT), 197 to 217 (GLAI…AYIA), 233 to 253 (GAGE…GFLW), 261 to 281 (VFMG…LAVI), 286 to 306 (MLLV…IFQV), and 335 to 355 (KIIV…ISTL).

This sequence belongs to the glycosyltransferase 4 family. MraY subfamily. The cofactor is Mg(2+).

It is found in the cell inner membrane. It carries out the reaction UDP-N-acetyl-alpha-D-muramoyl-L-alanyl-gamma-D-glutamyl-meso-2,6-diaminopimeloyl-D-alanyl-D-alanine + di-trans,octa-cis-undecaprenyl phosphate = di-trans,octa-cis-undecaprenyl diphospho-N-acetyl-alpha-D-muramoyl-L-alanyl-D-glutamyl-meso-2,6-diaminopimeloyl-D-alanyl-D-alanine + UMP. It participates in cell wall biogenesis; peptidoglycan biosynthesis. Catalyzes the initial step of the lipid cycle reactions in the biosynthesis of the cell wall peptidoglycan: transfers peptidoglycan precursor phospho-MurNAc-pentapeptide from UDP-MurNAc-pentapeptide onto the lipid carrier undecaprenyl phosphate, yielding undecaprenyl-pyrophosphoryl-MurNAc-pentapeptide, known as lipid I. In Geobacter sulfurreducens (strain ATCC 51573 / DSM 12127 / PCA), this protein is Phospho-N-acetylmuramoyl-pentapeptide-transferase.